A 365-amino-acid chain; its full sequence is Cobalt-precorrin-5B C(1)-methyltransferase (365 aa).

Belongs to the CbiD family.

It catalyses the reaction Co-precorrin-5B + S-adenosyl-L-methionine = Co-precorrin-6A + S-adenosyl-L-homocysteine. The protein operates within cofactor biosynthesis; adenosylcobalamin biosynthesis; cob(II)yrinate a,c-diamide from sirohydrochlorin (anaerobic route): step 6/10. Functionally, catalyzes the methylation of C-1 in cobalt-precorrin-5B to form cobalt-precorrin-6A. The polypeptide is Cobalt-precorrin-5B C(1)-methyltransferase (Methanococcus maripaludis (strain C6 / ATCC BAA-1332)).